The chain runs to 261 residues: Carbonic anhydrase 1 (261 aa).

A disordered region spans residues 1 to 31; that stretch reads MASPDWGYDDKNGPEQWSKLYPIANGNNQSP. Alanine 2 carries the N-acetylalanine modification. Residues 4–261 form the Alpha-carbonic anhydrase domain; the sequence is PDWGYDDKNG…LKGRTVRASF (258 aa). Catalysis depends on histidine 65, which acts as the Proton donor/acceptor. Histidine 95, histidine 97, and histidine 120 together coordinate Zn(2+). Residues threonine 200 and 200 to 201 each bind substrate; that span reads TH. The disordered stretch occupies residues 240–261; it reads VPMQHNNRPTQPLKGRTVRASF.

It belongs to the alpha-carbonic anhydrase family. It depends on Zn(2+) as a cofactor.

The protein localises to the cytoplasm. The catalysed reaction is hydrogencarbonate + H(+) = CO2 + H2O. The enzyme catalyses urea = cyanamide + H2O. With respect to regulation, inhibited by acetazolamide. Functionally, catalyzes the reversible hydration of carbon dioxide. Can hydrate cyanamide to urea. The chain is Carbonic anhydrase 1 (CA1) from Gorilla gorilla gorilla (Western lowland gorilla).